A 314-amino-acid chain; its full sequence is DNA topoisomerase I (314 aa).

One can recognise a Topo IB-type catalytic domain in the interval 77–314 (IQNRNAKRDR…VDHVKSSTDG (238 aa)). Y274 functions as the O-(3'-phospho-DNA)-tyrosine intermediate in the catalytic mechanism.

It belongs to the type IB topoisomerase family.

Its subcellular location is the virion. The catalysed reaction is ATP-independent breakage of single-stranded DNA, followed by passage and rejoining.. Functionally, releases the supercoiling and torsional tension of DNA introduced during the DNA replication and transcription by transiently cleaving and rejoining one strand of the DNA duplex. Introduces a single-strand break via transesterification at the specific target site 5'-[CT]CCTTp site in duplex DNA. The scissile phosphodiester is attacked by the catalytic tyrosine of the enzyme, resulting in the formation of a DNA-(3'-phosphotyrosyl)-enzyme intermediate and the expulsion of a 5'-OH DNA strand. The free DNA strand then undergoes passage around the unbroken strand thus removing DNA supercoils. Finally, in the religation step, the DNA 5'-OH attacks the covalent intermediate to expel the active-site tyrosine and restore the DNA phosphodiester backbone. The chain is DNA topoisomerase I (OPG111) from Cynomys gunnisoni (Gunnison's prairie dog).